A 443-amino-acid polypeptide reads, in one-letter code: Aklavinone 7-beta-L-rhodosaminyltransferase (443 aa).

The first 23 residues, 1 to 23 (MRVLLTSFALDAHFNGSVPLAWA), serve as a signal peptide directing secretion.

Belongs to the glycosyltransferase 28 family.

The enzyme catalyses dTDP-beta-L-rhodosamine + aklavinone = aclacinomycin T + dTDP + 2 H(+). With respect to regulation, the activity of AknS is substantially increased by the addition of the accessory protein AknT. Its function is as follows. Involved in the biosynthesis of the anthracycline antitumor agent aclacinomycin A. Catalyzes the transfer of the proximal deoxyhexose, L-rhodosamine, from dTDP-beta-L-rhodosamine to the C7-OH of aklavinone aglycone to yield aclacinomycin T (rhodosaminyl-aklavinone). It can also use dTDP-2-deoxy-beta-L-fucose, TDP-2-deoxyfucose, dTDP-4-amino-2-deoxyrhamnose, TDP-L-rhodosamine as sugar donor and epsilon-rhodomycinone as sugar acceptor. The protein is Aklavinone 7-beta-L-rhodosaminyltransferase of Streptomyces galilaeus.